The chain runs to 290 residues: Endoplasmic reticulum-Golgi intermediate compartment protein 1 (290 aa).

Topologically, residues 1–26 (MPFDFRRFDIYRKVPKDLTQPTYTGA) are cytoplasmic. A helical membrane pass occupies residues 27–47 (IISICCCLFILFLFLSELTGF). The Lumenal portion of the chain corresponds to 48–254 (ITTEVVNELY…RRQPLYRFIT (207 aa)). N74 is a glycosylation site (N-linked (GlcNAc...) asparagine). The helical transmembrane segment at 255–275 (TICAIIGGTFTVAGILDSCIF) threads the bilayer. Topologically, residues 276-290 (TASEAWKKIQLGKMH) are cytoplasmic.

This sequence belongs to the ERGIC family. May form a heteromeric complex composed of ERGIC1, ERGIC2 and ERGIC3. Within the complex, the interaction with ERGIC3 is direct. Interacts with ERGIC3/ERV46. In terms of processing, N-glycosylated.

The protein resides in the endoplasmic reticulum membrane. The protein localises to the endoplasmic reticulum-Golgi intermediate compartment membrane. It localises to the golgi apparatus membrane. Possible role in transport between endoplasmic reticulum and Golgi. This chain is Endoplasmic reticulum-Golgi intermediate compartment protein 1 (ERGIC1), found in Homo sapiens (Human).